The chain runs to 518 residues: Vesicular inhibitory amino acid transporter (518 aa).

Residues 1–125 lie on the Cytoplasmic side of the membrane; it reads MATLIRSKLS…WNVTNAIQGM (125 aa). Residues 126–146 form a helical membrane-spanning segment; it reads FVLGLPYAILHGGYLGLFLII. Residues 147–197 are Lumenal, vesicle-facing; sequence FAAVVCCYTGKILIACLYEENEDGETVRVRDSYVDIANACCAPRFPKLGGR. The helical transmembrane segment at 198–218 threads the bilayer; that stretch reads VVNVAQIIELVMTCILYVVVS. Residues 219–258 are Cytoplasmic-facing; the sequence is GNLMYNSFPNLPISQKSWSIMATAVLLPCAFLKNLKAVSK. A helical transmembrane segment spans residues 259–279; it reads FSLLCTVAHFVINILVIAYCL. Residues 280 to 298 are Lumenal, vesicle-facing; the sequence is SRARDWAWDKVKFYIDVKK. The helical transmembrane segment at 299-319 threads the bilayer; that stretch reads FPISIGIIVFSYTSQIFLPSL. Over 320 to 334 the chain is Cytoplasmic; that stretch reads EGNMQSPREFHCMMN. A helical transmembrane segment spans residues 335–355; that stretch reads WTHIAACILKGLFALVAYLTW. Topologically, residues 356-376 are lumenal, vesicle; it reads ADETKEVITDNLPSTIRAVVN. Residues 377–397 form a helical membrane-spanning segment; sequence LFLVSKALLSYPLPFFAAVEV. Residues 398 to 431 lie on the Cytoplasmic side of the membrane; the sequence is LEKSLFQEGARAFFPNCYGGDGRLKSWGLTLRCA. The chain crosses the membrane as a helical span at residues 432-452; it reads LVVFTLLMAIYVPHFALLMGL. The Lumenal, vesicle portion of the chain corresponds to 453–454; sequence TG. The helical transmembrane segment at 455 to 475 threads the bilayer; that stretch reads SLTGAGLCFLLPSLFHLKLMW. Topologically, residues 476–482 are cytoplasmic; sequence RQLLWHQ. The chain crosses the membrane as a helical span at residues 483-503; that stretch reads VFFDVSIFVIGSICSVSGFVH. Over 504–518 the chain is Lumenal, vesicle; that stretch reads SLEGLIEAYAYNIED.

This sequence belongs to the amino acid/polyamine transporter 2 family. In terms of tissue distribution, initially expressed in late neurula stages in the anterior spinal cord. By early tailbud stages, expression extends posteriorly along the entire developing spinal cord and appears in the hindbrain. In late tailbud embryos, expressed in the forebrain, midbrain, hindbrain, spinal cord and retina. In swimming tadpoles, expressed in an extended and more intense pattern including interneurons.

The protein resides in the cytoplasmic vesicle membrane. It localises to the presynapse. The catalysed reaction is 4-aminobutanoate(out) + n H(+)(in) = 4-aminobutanoate(in) + n H(+)(out). It catalyses the reaction glycine(out) + n H(+)(in) = glycine(in) + n H(+)(out). It carries out the reaction beta-alanine(out) + n H(+)(in) = beta-alanine(in) + n H(+)(out). Antiporter that exchanges vesicular protons for cytosolic 4-aminobutanoate or to a lesser extend glycine, thus allowing their secretion from nerve terminals. The transport is equally dependent on the chemical and electrical components of the proton gradient. May also transport beta-alanine. Acidification of GABAergic synaptic vesicles is a prerequisite for 4-aminobutanoate uptake. This is Vesicular inhibitory amino acid transporter from Xenopus laevis (African clawed frog).